The chain runs to 160 residues: MMLKNDFNVLGQIAWLWANSPMHRNWSVSLLMKNVIPAIENDQYLLLVDDGFPIAYCSWAKLTLESEARYVKDTNSLKIDDWNAGDRIWIIDWIAPFGDSSLLYKHMRQRFPYDIGRAIRIYPSKKDTGKIIYLKGGKITKKVAEKTFLQYEQELITALQ.

Catalysis depends on residues histidine 23 and aspartate 92.

It belongs to the RTX toxin acyltransferase family. As to quaternary structure, homodimer.

The protein localises to the cytoplasm. The catalysed reaction is a fatty acyl-[ACP] + L-lysyl-[protein] = N(6)-(fatty acyl)-L-lysyl-[protein] + holo-[ACP] + H(+). Protein-lysine acyltransferase that catalyzes fatty acylation of the protoxin, thereby converting it to the active toxin. The protein is RTX-II toxin-activating lysine-acyltransferase ApxIIC (apxIIC) of Actinobacillus pleuropneumoniae (Haemophilus pleuropneumoniae).